The primary structure comprises 331 residues: Pectinesterase (331 aa).

The N-terminal stretch at 1 to 17 is a signal peptide; the sequence is MVKSVLASALFAVSALA. Glutamine 139 is a binding site for substrate. The active-site Proton donor is aspartate 162. Catalysis depends on aspartate 183, which acts as the Nucleophile. Substrate contacts are provided by arginine 248 and tryptophan 250.

It belongs to the pectinesterase family.

The protein resides in the secreted. The enzyme catalyses [(1-&gt;4)-alpha-D-galacturonosyl methyl ester](n) + n H2O = [(1-&gt;4)-alpha-D-galacturonosyl](n) + n methanol + n H(+). It functions in the pathway glycan metabolism; pectin degradation; 2-dehydro-3-deoxy-D-gluconate from pectin: step 1/5. Involved in maceration and soft-rotting of plant tissue. The chain is Pectinesterase (pme1) from Aspergillus aculeatus.